Reading from the N-terminus, the 57-residue chain is Andropin (57 aa).

A signal peptide spans 1–23; that stretch reads MKYFVVLVVLALILAITVGPSDA.

It belongs to the andropin family. As to expression, ejaculatory duct of adult males.

It is found in the secreted. Its function is as follows. Male-specific peptide with moderate activity against Gram-positive bacteria. The polypeptide is Andropin (Anp) (Drosophila mauritiana (Fruit fly)).